Consider the following 99-residue polypeptide: Co-chaperonin GroES (99 aa).

Belongs to the GroES chaperonin family. Heptamer of 7 subunits arranged in a ring. Interacts with the chaperonin GroEL.

The protein localises to the cytoplasm. In terms of biological role, together with the chaperonin GroEL, plays an essential role in assisting protein folding. The GroEL-GroES system forms a nano-cage that allows encapsulation of the non-native substrate proteins and provides a physical environment optimized to promote and accelerate protein folding. GroES binds to the apical surface of the GroEL ring, thereby capping the opening of the GroEL channel. The polypeptide is Co-chaperonin GroES (Corynebacterium jeikeium (strain K411)).